The following is a 501-amino-acid chain: Cystine/glutamate transporter (501 aa).

Over 1–43 the chain is Cytoplasmic; sequence MVRKPVVSTISKGGYLQGNVNGRLPSLGNKEPPGQEKVQLKRK. Ser-26 carries the post-translational modification Phosphoserine. A helical transmembrane segment spans residues 44–64; the sequence is VTLLRGVSIIIGTIIGAGIFI. At 65 to 74 the chain is on the extracellular side; sequence SPKGVLQNTG. The chain crosses the membrane as a helical span at residues 75–95; that stretch reads SVGMSLTIWTVCGVLSLFGAL. Residues 96-101 lie on the Cytoplasmic side of the membrane; sequence SYAELG. The stretch at 102–116 is an intramembrane region; sequence TTIKKSGGHYTYILE. Over 117 to 130 the chain is Cytoplasmic; the sequence is VFGPLPAFVRVWVE. The chain crosses the membrane as a helical span at residues 131 to 150; the sequence is LLIIRPAATAVISLAFGRYI. L-glutamate is bound at residue Arg-135. Over 151-163 the chain is Extracellular; that stretch reads LEPFFIQCEIPEL. The chain crosses the membrane as a helical span at residues 164-179; sequence AIKLITAVGITVVMVL. The Cytoplasmic segment spans residues 180–193; the sequence is NSMSVSWSARIQIF. Residues 194-210 traverse the membrane as a helical segment; sequence LTFCKLTAILIIIVPGV. The Extracellular portion of the chain corresponds to 211-234; sequence MQLIKGQTQNFKDAFSGRDSSITR. Residues 235 to 255 traverse the membrane as a helical segment; that stretch reads LPLAFYYGMYAYAGWFYLNFV. Tyr-244 contacts L-glutamate. The Cytoplasmic portion of the chain corresponds to 256-265; that stretch reads TEEVENPEKT. A helical membrane pass occupies residues 266–286; the sequence is IPLAICISMAIVTIGYVLTNV. Topologically, residues 287 to 317 are extracellular; sequence AYFTTINAEELLLSNAVAVTFSERLLGNFSL. The N-linked (GlcNAc...) asparagine glycan is linked to Asn-314. The helical transmembrane segment at 318-338 threads the bilayer; sequence AVPIFVALSCFGSMNGGVFAV. The Cytoplasmic segment spans residues 339-364; the sequence is SRLFYVASREGHLPEILSMIHVRKHT. The helical transmembrane segment at 365–385 threads the bilayer; sequence PLPAVIVLHPLTMIMLFSGDL. Residues 386 to 387 are Extracellular-facing; it reads DS. A helical membrane pass occupies residues 388–408; the sequence is LLNFLSFARWLFIGLAVAGLI. The Cytoplasmic portion of the chain corresponds to 409 to 422; the sequence is YLRYKCPDMHRPFK. Residues 423–443 form a helical membrane-spanning segment; sequence VPLFIPALFSFTCLFMVALSL. Residues 444-449 lie on the Extracellular side of the membrane; the sequence is YSDPFS. The helical transmembrane segment at 450-470 threads the bilayer; sequence TGIGSVITLTGVPAYYLFIIW. Topologically, residues 471-501 are cytoplasmic; it reads DKKPRWFRIMSEKITRTLQIILEVVPEEDKL.

This sequence belongs to the amino acid-polyamine-organocation (APC) superfamily. L-type amino acid transporter (LAT) (TC 2.A.3.8) family. In terms of assembly, disulfide-linked heterodimer with the amino acid transport protein SLC3A2/4F2hc; this interaction mediates cell membrane localization.

Its subcellular location is the cell membrane. The protein localises to the cell projection. It is found in the microvillus membrane. The enzyme catalyses L-cystine(out) + L-glutamate(in) = L-cystine(in) + L-glutamate(out). It catalyses the reaction an L-alpha-amino acid(in) + L-kynurenine(out) = an L-alpha-amino acid(out) + L-kynurenine(in). It carries out the reaction N-acetyl-L-cysteine(out) + L-glutamate(in) = N-acetyl-L-cysteine(in) + L-glutamate(out). Functionally, heterodimer with SLC3A2, that functions as an antiporter by mediating the exchange of extracellular anionic L-cystine and intracellular L-glutamate across the cellular plasma membrane. Provides L-cystine for the maintenance of the redox balance between extracellular L-cystine and L-cysteine and for the maintenance of the intracellular levels of glutathione that is essential for cells protection from oxidative stress. The transport is sodium-independent, electroneutral with a stoichiometry of 1:1, and is drove by the high intracellular concentration of L-glutamate and the intracellular reduction of L-cystine. In addition, mediates the import of L-kynurenine leading to anti-ferroptotic signaling propagation required to maintain L-cystine and glutathione homeostasis. Moreover, mediates N-acetyl-L-cysteine uptake into the placenta leading to subsequently down-regulation of pathways associated with oxidative stress, inflammation and apoptosis. In vitro can also transport L-aspartate. May participate in astrocyte and meningeal cell proliferation during development and can provide neuroprotection by promoting glutathione synthesis and delivery from non-neuronal cells such as astrocytes and meningeal cells to immature neurons. Controls the production of pheomelanin pigment directly. The chain is Cystine/glutamate transporter from Pongo abelii (Sumatran orangutan).